A 1116-amino-acid polypeptide reads, in one-letter code: Surface layer protein (1116 aa).

The signal sequence occupies residues methionine 1–alanine 53. 3 consecutive SLH domains span residues alanine 54–glutamine 117, phenylalanine 118–tryptophan 181, and proline 182–aspartate 231.

Its subcellular location is the secreted. It is found in the cell wall. It localises to the S-layer. The sequence is that of Surface layer protein from Brevibacillus choshinensis.